Here is a 149-residue protein sequence, read N- to C-terminus: Squidulin (149 aa).

Ala-1 is modified (N-acetylalanine). EF-hand domains lie at 7 to 42 (KQIAEIKDAFDMFDIDGDGQITSKELRSVMKSLGRT), 43 to 78 (PSDAELEEMIREVDTDGNGTIEYAEFVEMMAKQMGP), 80 to 115 (DPEKEMREAFRVFDKDGNGLITAAELRQVMANFSDE), and 117 to 149 (LTSEEISEMIREADIDGDGMVNYEEFVKMMTPK). Asp-20, Asp-22, Asp-24, Gln-26, Glu-31, Asp-56, Asp-58, Asn-60, Thr-62, Glu-67, Asp-93, Asp-95, Asn-97, Glu-104, Asp-130, Asp-132, Asp-134, Met-136, and Glu-141 together coordinate Ca(2+).

It belongs to the calmodulin family.

Its function is as follows. Not known. This protein has four functional calcium-binding sites. This is Squidulin from Doryteuthis pealeii (Longfin inshore squid).